The sequence spans 286 residues: ATP synthase gamma chain (286 aa).

Belongs to the ATPase gamma chain family. F-type ATPases have 2 components, CF(1) - the catalytic core - and CF(0) - the membrane proton channel. CF(1) has five subunits: alpha(3), beta(3), gamma(1), delta(1), epsilon(1). CF(0) has three main subunits: a, b and c.

It is found in the cell inner membrane. Functionally, produces ATP from ADP in the presence of a proton gradient across the membrane. The gamma chain is believed to be important in regulating ATPase activity and the flow of protons through the CF(0) complex. This chain is ATP synthase gamma chain, found in Pseudomonas entomophila (strain L48).